A 485-amino-acid chain; its full sequence is Beta-amyrin 28-monooxygenase CYP716A378 (485 aa).

Residues 3–23 (LFFICGLVLFSTLSLISLFLL) traverse the membrane as a helical; Signal-anchor for type II membrane protein segment. N-linked (GlcNAc...) asparagine glycosylation is found at Asn-25 and Asn-386. Cys-426 is a binding site for heme.

This sequence belongs to the cytochrome P450 family. The cofactor is heme. As to expression, mainly expressed in flowers and flower buds, to a lesser extent in young leaves and, at low levels, in old leaves, stems and roots.

Its subcellular location is the membrane. The enzyme catalyses beta-amyrin + 3 reduced [NADPH--hemoprotein reductase] + 3 O2 = oleanolate + 3 oxidized [NADPH--hemoprotein reductase] + 4 H2O + 4 H(+). Its pathway is secondary metabolite biosynthesis; terpenoid biosynthesis. In terms of biological role, component of the oleanane-type triterpene saponins (e.g. saponarioside A and saponarioside B) biosynthetic pathway, leading to the production of natural products with detergent properties used as traditional sources of soap. An oxidoreductase that facilitates the oxidation of the methyl group to a carboxyl group at the C-28 position of beta-amyrin, resulting in the formation of oleanolate. The protein is Beta-amyrin 28-monooxygenase CYP716A378 of Saponaria officinalis (Common soapwort).